A 109-amino-acid chain; its full sequence is Flagellar hook-basal body complex protein FliE (109 aa).

The protein belongs to the FliE family.

The protein localises to the bacterial flagellum basal body. This Pseudomonas syringae pv. tomato (strain ATCC BAA-871 / DC3000) protein is Flagellar hook-basal body complex protein FliE.